The sequence spans 1096 residues: DNA-directed RNA polymerase subunit beta (1096 aa).

Belongs to the RNA polymerase beta chain family. In plastids the minimal PEP RNA polymerase catalytic core is composed of four subunits: alpha, beta, beta', and beta''. When a (nuclear-encoded) sigma factor is associated with the core the holoenzyme is formed, which can initiate transcription.

It is found in the plastid. It localises to the chloroplast. The enzyme catalyses RNA(n) + a ribonucleoside 5'-triphosphate = RNA(n+1) + diphosphate. In terms of biological role, DNA-dependent RNA polymerase catalyzes the transcription of DNA into RNA using the four ribonucleoside triphosphates as substrates. The polypeptide is DNA-directed RNA polymerase subunit beta (Guillardia theta (Cryptophyte)).